The sequence spans 341 residues: tRNA N6-adenosine threonylcarbamoyltransferase (341 aa).

2 residues coordinate Fe cation: histidine 111 and histidine 115. Residues 133–137 (VVSGG), aspartate 166, glycine 179, aspartate 183, and asparagine 271 contribute to the substrate site. Aspartate 299 contacts Fe cation.

It belongs to the KAE1 / TsaD family. Requires Fe(2+) as cofactor.

Its subcellular location is the cytoplasm. The catalysed reaction is L-threonylcarbamoyladenylate + adenosine(37) in tRNA = N(6)-L-threonylcarbamoyladenosine(37) in tRNA + AMP + H(+). In terms of biological role, required for the formation of a threonylcarbamoyl group on adenosine at position 37 (t(6)A37) in tRNAs that read codons beginning with adenine. Is involved in the transfer of the threonylcarbamoyl moiety of threonylcarbamoyl-AMP (TC-AMP) to the N6 group of A37, together with TsaE and TsaB. TsaD likely plays a direct catalytic role in this reaction. This is tRNA N6-adenosine threonylcarbamoyltransferase from Fusobacterium nucleatum subsp. nucleatum (strain ATCC 25586 / DSM 15643 / BCRC 10681 / CIP 101130 / JCM 8532 / KCTC 2640 / LMG 13131 / VPI 4355).